The following is a 209-amino-acid chain: Uracil phosphoribosyltransferase (209 aa).

Residues arginine 79, arginine 104, and 131 to 139 each bind 5-phospho-alpha-D-ribose 1-diphosphate; that span reads DPMLATGGS. Uracil contacts are provided by residues isoleucine 194 and 199–201; that span reads GDA. Aspartate 200 contacts 5-phospho-alpha-D-ribose 1-diphosphate.

The protein belongs to the UPRTase family. It depends on Mg(2+) as a cofactor.

It catalyses the reaction UMP + diphosphate = 5-phospho-alpha-D-ribose 1-diphosphate + uracil. Its pathway is pyrimidine metabolism; UMP biosynthesis via salvage pathway; UMP from uracil: step 1/1. Allosterically activated by GTP. In terms of biological role, catalyzes the conversion of uracil and 5-phospho-alpha-D-ribose 1-diphosphate (PRPP) to UMP and diphosphate. In Clostridium kluyveri (strain NBRC 12016), this protein is Uracil phosphoribosyltransferase.